A 237-amino-acid polypeptide reads, in one-letter code: DNA repair protein RecO (237 aa).

Belongs to the RecO family.

Its function is as follows. Involved in DNA repair and RecF pathway recombination. The protein is DNA repair protein RecO of Rickettsia akari (strain Hartford).